The sequence spans 151 residues: Lipoprotein signal peptidase (151 aa).

Transmembrane regions (helical) follow at residues 61-81 (GSQWLGWISLLVSVGLLIWIG) and 88-107 (SRWQAAAAAFLLAGSVGNGI). Active-site residues include aspartate 117 and aspartate 133. A helical transmembrane segment spans residues 128-148 (VFNLADVAINLAVLCLLIEAI).

It belongs to the peptidase A8 family.

The protein resides in the cell inner membrane. It catalyses the reaction Release of signal peptides from bacterial membrane prolipoproteins. Hydrolyzes -Xaa-Yaa-Zaa-|-(S,diacylglyceryl)Cys-, in which Xaa is hydrophobic (preferably Leu), and Yaa (Ala or Ser) and Zaa (Gly or Ala) have small, neutral side chains.. Its pathway is protein modification; lipoprotein biosynthesis (signal peptide cleavage). This protein specifically catalyzes the removal of signal peptides from prolipoproteins. The polypeptide is Lipoprotein signal peptidase (Synechococcus sp. (strain RCC307)).